The primary structure comprises 349 residues: Protein RecA (349 aa).

G69 to T76 is an ATP binding site.

The protein belongs to the RecA family.

It is found in the cytoplasm. Its function is as follows. Can catalyze the hydrolysis of ATP in the presence of single-stranded DNA, the ATP-dependent uptake of single-stranded DNA by duplex DNA, and the ATP-dependent hybridization of homologous single-stranded DNAs. It interacts with LexA causing its activation and leading to its autocatalytic cleavage. This chain is Protein RecA, found in Rippkaea orientalis (strain PCC 8801 / RF-1) (Cyanothece sp. (strain PCC 8801)).